The sequence spans 53 residues: Sec-independent protein translocase protein TatA (53 aa).

Residues 1–21 (MGMSFSHLLIVLLIIFVLFGA) form a helical membrane-spanning segment.

It belongs to the TatA/E family. The Tat system comprises two distinct complexes: a TatABC complex, containing multiple copies of TatA, TatB and TatC subunits, and a separate TatA complex, containing only TatA subunits. Substrates initially bind to the TatABC complex, which probably triggers association of the separate TatA complex to form the active translocon.

Its subcellular location is the cell inner membrane. Its function is as follows. Part of the twin-arginine translocation (Tat) system that transports large folded proteins containing a characteristic twin-arginine motif in their signal peptide across membranes. TatA could form the protein-conducting channel of the Tat system. This Rickettsia rickettsii (strain Iowa) protein is Sec-independent protein translocase protein TatA.